Here is a 397-residue protein sequence, read N- to C-terminus: Probable inactive purple acid phosphatase 28 (397 aa).

A signal peptide spans 1–30 (MNCSIGNWKHTVLYLTLIVSLLYFIESLIS). N-linked (GlcNAc...) asparagine glycosylation is found at Asn91 and Asn209. His266 and His314 together coordinate Zn(2+). 314 to 316 (HDH) serves as a coordination point for substrate. His316 contributes to the Fe cation binding site.

Belongs to the metallophosphoesterase superfamily. Purple acid phosphatase family. In terms of assembly, homodimer. Fe cation serves as cofactor. Requires Zn(2+) as cofactor. Expressed in roots, stems, leaves, flowers and siliques.

It is found in the secreted. The polypeptide is Probable inactive purple acid phosphatase 28 (PAP28) (Arabidopsis thaliana (Mouse-ear cress)).